A 529-amino-acid chain; its full sequence is Probable feruloyl esterase B-1 (529 aa).

An N-terminal signal peptide occupies residues 1–19 (MKISYFFVASLSYVSVARA). Cystine bridges form between C27–C75 and C63–C114. Residues N53, N64, N85, N98, and N138 are each glycosylated (N-linked (GlcNAc...) asparagine). Intrachain disulfides connect C187-C445, C256-C273, C282-C295, and C505-C527. S188 functions as the Acyl-ester intermediate in the catalytic mechanism. N233 is a glycosylation site (N-linked (GlcNAc...) asparagine). The Ca(2+) site is built by D257, D260, A262, D264, and L266. N286, N290, and N354 each carry an N-linked (GlcNAc...) asparagine glycan. Catalysis depends on charge relay system residues D404 and H444.

The protein belongs to the tannase family.

It is found in the secreted. The catalysed reaction is feruloyl-polysaccharide + H2O = ferulate + polysaccharide.. In terms of biological role, involved in degradation of plant cell walls. Hydrolyzes the feruloyl-arabinose ester bond in arabinoxylans as well as the feruloyl-galactose and feruloyl-arabinose ester bonds in pectin. In Aspergillus terreus (strain NIH 2624 / FGSC A1156), this protein is Probable feruloyl esterase B-1 (faeB-1).